The chain runs to 488 residues: 6-phosphogluconate dehydrogenase, decarboxylating (488 aa).

Residues 9–14 (GLAVMG), 32–34 (NRT), 74–76 (VKA), and Asn102 each bind NADP(+). Substrate contacts are provided by residues Asn102 and 128–130 (SGG). Lys183 acts as the Proton acceptor in catalysis. A substrate-binding site is contributed by 186–187 (HN). Glu190 acts as the Proton donor in catalysis. The substrate site is built by Tyr191, Lys260, Arg287, Arg451, and His457.

This sequence belongs to the 6-phosphogluconate dehydrogenase family. Homodimer.

It catalyses the reaction 6-phospho-D-gluconate + NADP(+) = D-ribulose 5-phosphate + CO2 + NADPH. It functions in the pathway carbohydrate degradation; pentose phosphate pathway; D-ribulose 5-phosphate from D-glucose 6-phosphate (oxidative stage): step 3/3. Functionally, catalyzes the oxidative decarboxylation of 6-phosphogluconate to ribulose 5-phosphate and CO(2), with concomitant reduction of NADP to NADPH. The chain is 6-phosphogluconate dehydrogenase, decarboxylating (gnd) from Treponema pallidum (strain Nichols).